A 328-amino-acid polypeptide reads, in one-letter code: Biotin synthase (328 aa).

Positions 41 to 260 (TAIETASLLS…VALARILMPA (220 aa)) constitute a Radical SAM core domain. Residues Cys-56, Cys-60, and Cys-63 each coordinate [4Fe-4S] cluster. Residues Cys-100, Cys-131, Cys-191, and Arg-264 each coordinate [2Fe-2S] cluster.

It belongs to the radical SAM superfamily. Biotin synthase family. In terms of assembly, homodimer. [4Fe-4S] cluster serves as cofactor. The cofactor is [2Fe-2S] cluster.

It carries out the reaction (4R,5S)-dethiobiotin + (sulfur carrier)-SH + 2 reduced [2Fe-2S]-[ferredoxin] + 2 S-adenosyl-L-methionine = (sulfur carrier)-H + biotin + 2 5'-deoxyadenosine + 2 L-methionine + 2 oxidized [2Fe-2S]-[ferredoxin]. It participates in cofactor biosynthesis; biotin biosynthesis; biotin from 7,8-diaminononanoate: step 2/2. Catalyzes the conversion of dethiobiotin (DTB) to biotin by the insertion of a sulfur atom into dethiobiotin via a radical-based mechanism. The polypeptide is Biotin synthase (Cereibacter sphaeroides (strain ATCC 17023 / DSM 158 / JCM 6121 / CCUG 31486 / LMG 2827 / NBRC 12203 / NCIMB 8253 / ATH 2.4.1.) (Rhodobacter sphaeroides)).